Reading from the N-terminus, the 528-residue chain is Tyrosine--tRNA ligase, cytoplasmic (528 aa).

L-tyrosine is bound at residue Tyr-39. Positions 44–52 (TTGKPHVAY) match the 'HIGH' region motif. Residues Tyr-166, Gln-170, Asp-173, and Gln-188 each coordinate L-tyrosine. Residues 222-226 (KMSSS) carry the 'KMSKS' region motif. The Nuclear localization signal motif lies at 242–247 (KKKLKK). Residues 335–364 (KLSNDAYPGASKQKTVPKGSTKNSGPEEID) form a disordered region. Positions 346–358 (KQKTVPKGSTKNS) are enriched in polar residues. The 105-residue stretch at 364–468 (DPSLLDLRVG…TGSAPGERIY (105 aa)) folds into the tRNA-binding domain.

It belongs to the class-I aminoacyl-tRNA synthetase family. Homodimer.

Its subcellular location is the cytoplasm. It is found in the nucleus. The enzyme catalyses tRNA(Tyr) + L-tyrosine + ATP = L-tyrosyl-tRNA(Tyr) + AMP + diphosphate + H(+). Catalyzes the attachment of tyrosine to tRNA(Tyr) in a two-step reaction: tyrosine is first activated by ATP to form Tyr-AMP and then transferred to the acceptor end of tRNA(Tyr). The protein is Tyrosine--tRNA ligase, cytoplasmic (yars1) of Xenopus tropicalis (Western clawed frog).